A 63-amino-acid polypeptide reads, in one-letter code: Toxin Tx7335 (63 aa).

4 disulfide bridges follow: cysteine 3-cysteine 24, cysteine 17-cysteine 39, cysteine 25-cysteine 55, and cysteine 56-cysteine 61.

Post-translationally, contains 4 disulfide bonds. In terms of tissue distribution, expressed by the venom gland.

The protein resides in the secreted. In terms of biological role, activates bacterial pH-gated potassium channel KcsA by binding to its extracellular domain, probably at a site different from channel inhibitors. Increases both mean open time and open probability of KscA. The sequence is that of Toxin Tx7335 from Dendroaspis angusticeps (Eastern green mamba).